The sequence spans 307 residues: Oxygen-dependent coproporphyrinogen-III oxidase (307 aa).

S94 is a substrate binding site. The a divalent metal cation site is built by H98 and H108. The Proton donor role is filled by H108. 110–112 lines the substrate pocket; it reads NVR. A divalent metal cation is bound by residues H147 and H177. Residues 242-277 are important for dimerization; the sequence is YVEFNLVWDRGTLFGLQSGGRTESILMSMPPLAQWQ. 260–262 is a binding site for substrate; the sequence is GGR.

The protein belongs to the aerobic coproporphyrinogen-III oxidase family. Homodimer. A divalent metal cation is required as a cofactor.

The protein localises to the cytoplasm. The enzyme catalyses coproporphyrinogen III + O2 + 2 H(+) = protoporphyrinogen IX + 2 CO2 + 2 H2O. It functions in the pathway porphyrin-containing compound metabolism; protoporphyrin-IX biosynthesis; protoporphyrinogen-IX from coproporphyrinogen-III (O2 route): step 1/1. Its function is as follows. Involved in the heme biosynthesis. Catalyzes the aerobic oxidative decarboxylation of propionate groups of rings A and B of coproporphyrinogen-III to yield the vinyl groups in protoporphyrinogen-IX. This Chromohalobacter salexigens (strain ATCC BAA-138 / DSM 3043 / CIP 106854 / NCIMB 13768 / 1H11) protein is Oxygen-dependent coproporphyrinogen-III oxidase.